Here is a 1096-residue protein sequence, read N- to C-terminus: Pullulanase (1096 aa).

A signal peptide spans 1–19 (MLRYTCHALFLGSLVLLSG). C20 carries the N-palmitoyl cysteine lipid modification. C20 carries S-diacylglycerol cysteine lipidation. Over residues 24 to 34 (SSSSTSGSPGS) the composition is skewed to low complexity. Positions 24-50 (SSSSTSGSPGSPGNPGNPGTPGTPDPQ) are disordered. The active-site Nucleophile is D694. E723 acts as the Proton donor in catalysis. The disordered stretch occupies residues 1014–1044 (QAGRQSGQPCRRHRGGDQRRAGKPDAAGLRR).

Belongs to the glycosyl hydrolase 13 family. As to quaternary structure, homotrimer.

It localises to the cell membrane. It carries out the reaction Hydrolysis of (1-&gt;6)-alpha-D-glucosidic linkages in pullulan, amylopectin and glycogen, and in the alpha- and beta-limit dextrins of amylopectin and glycogen.. The polypeptide is Pullulanase (pulA) (Klebsiella aerogenes (Enterobacter aerogenes)).